The sequence spans 139 residues: Small ribosomal subunit protein uS11 (139 aa).

2 disordered regions span residues 1–33 and 118–139; these read MPPA…AAHI and GAIS…RRRV. A compositionally biased stretch (basic residues) spans 14-23; the sequence is KGQKTRRREK.

The protein belongs to the universal ribosomal protein uS11 family. As to quaternary structure, part of the 30S ribosomal subunit. Interacts with proteins S7 and S18. Binds to IF-3.

Located on the platform of the 30S subunit, it bridges several disparate RNA helices of the 16S rRNA. Forms part of the Shine-Dalgarno cleft in the 70S ribosome. This is Small ribosomal subunit protein uS11 from Mycobacterium tuberculosis (strain ATCC 25177 / H37Ra).